Here is a 197-residue protein sequence, read N- to C-terminus: 3-isopropylmalate dehydratase small subunit (197 aa).

Belongs to the LeuD family. LeuD type 1 subfamily. As to quaternary structure, heterodimer of LeuC and LeuD.

The enzyme catalyses (2R,3S)-3-isopropylmalate = (2S)-2-isopropylmalate. It participates in amino-acid biosynthesis; L-leucine biosynthesis; L-leucine from 3-methyl-2-oxobutanoate: step 2/4. Its function is as follows. Catalyzes the isomerization between 2-isopropylmalate and 3-isopropylmalate, via the formation of 2-isopropylmaleate. In Corynebacterium glutamicum (strain ATCC 13032 / DSM 20300 / JCM 1318 / BCRC 11384 / CCUG 27702 / LMG 3730 / NBRC 12168 / NCIMB 10025 / NRRL B-2784 / 534), this protein is 3-isopropylmalate dehydratase small subunit.